Here is a 262-residue protein sequence, read N- to C-terminus: Intercellular adhesion molecule 4 (262 aa).

The N-terminal stretch at 1–22 (MESALLLPSLLLVAAYPRGGSP) is a signal peptide. Over 23 to 231 (QQEWMQSPPA…LTVLALSPAS (209 aa)) the chain is Extracellular. 2 Ig-like C2-type domains span residues 54-116 (GGSA…TREA) and 138-209 (GHKY…LNLD). N-linked (GlcNAc...) asparagine glycosylation is found at Asn60, Asn84, and Asn182. 4 disulfide bridges follow: Cys61-Cys105, Cys61-Cys109, Cys65-Cys109, and Cys145-Cys202. Residues 232-252 (IALASTSIATLVGILLAVGAV) form a helical membrane-spanning segment. Residues 253 to 262 (YVRKYLAVQT) lie on the Cytoplasmic side of the membrane.

It belongs to the immunoglobulin superfamily. ICAM family.

It is found in the cell membrane. The protein resides in the secreted. Functionally, adhesion molecule that binds to leukocyte adhesion LFA-1 protein LFA-1 (integrin alpha-L/beta-2). ICAM4 is also a ligand for alpha-4/beta-1 and alpha-V integrins. Isoform 2 may modulate binding of membrane-associated ICAM4. This Mus musculus (Mouse) protein is Intercellular adhesion molecule 4 (Icam4).